The primary structure comprises 570 residues: Ribosome-inactivating protein SNAI (570 aa).

Residues 1–28 (MRLVAKLLYLAVLAICGLGIHGALTHPR) form the signal peptide. N-linked (GlcNAc...) asparagine glycosylation is found at Asn40, Asn62, and Asn144. The active site involves Glu199. Residue Asn260 is glycosylated (N-linked (GlcNAc...) asparagine). 3 disulfide bridges follow: Cys284–Cys316, Cys332–Cys351, and Cys373–Cys385. Ricin B-type lectin domains follow at residues 319-439 (VEVT…WTVG) and 441-566 (VEPL…WITT). A 1-alpha repeat occupies 329 to 369 (DGLCVDVRYGHYIDGNPVQLRPCGNECNQLWTFRTDGTIRW). Residues 370 to 405 (LGKCLTASSSVMIYDCNTVPPEATKWVVSIDGTITN) form a 1-beta repeat. Residues 408 to 440 (SGLVLTAPQAAEGTALSLENNIHAARQGWTVGD) form a 1-gamma repeat. One copy of the 2-alpha repeat lies at 452–489 (KQMCLRENGENNFVWLEDCVLNRVQQEWALYGDGTIRV). Cys455 and Cys470 form a disulfide bridge. N-linked (GlcNAc...) asparagine glycosylation is present at Asn492. The 2-beta repeat unit spans residues 493-531 (RSLCVTSEDHEPSDLIVILKCEGSGNQRWVFNTNGTISN). Cys496 and Cys513 are disulfide-bonded. N-linked (GlcNAc...) asparagine glycosylation occurs at Asn526. One copy of the 2-gamma repeat lies at 534 to 567 (AKLLMDVAQRDVSLRKIILYRPTGNPNQQWITTT).

It belongs to the ribosome-inactivating protein family. Type 2 RIP subfamily. As to quaternary structure, tetramer of four pairs of disulfide bound A-B chains. In terms of processing, the precursor is processed in two chains, A and B, that are linked by a disulfide bond. A small truncated form corresponding roughly to the second ricin B-type lectin domain of the B chain, TrSNAI, can also be produced. Post-translationally, glycosylated. N-glycans of subunit A are (Man)2-3(Xyl)(GlcNAc)2(Fuc) at Asn-40, (GlcNAc)0-2(Man)3(Xyl)(GlcNAc)2(Fuc) or (Man)1-2(GlcNAc)2 at Asn-62, (Man)3(Xyl)(GlcNAc)2(Fuc)0-1 at Asn-144 and (GlcNAc)0-1(Man)3(Xyl)(GlcNAc)2(Fuc) at Asn-260. N-glycans of subunit B are (Man)3(Xyl)(GlcNAc)2(Fuc) at Asn-492 and (Man)6-9(GlcNAc)2 at Asn-526. Expressed in bark.

The catalysed reaction is Endohydrolysis of the N-glycosidic bond at one specific adenosine on the 28S rRNA.. Its function is as follows. Neu5Ac(alpha2-6)Gal/GalNAc specific agglutinin. Behaves as a type-2 ribosome-inactivating protein. Strongly inhibits mammalian but not plant ribosomes. The A chain is responsible for inhibiting protein synthesis through the catalytic inactivation of 60S ribosomal subunits by removing adenine from position 4,324 of 28S rRNA. The B chain binds to cell receptors and probably facilitates the entry into the cell of the A chain; B chains are also responsible for cell agglutination (lectin activity). Involved in plant defense against insects. In terms of biological role, binds Neu5Ac(alpha2-6)Gal/GalNAc but has no clear agglutination activity. This chain is Ribosome-inactivating protein SNAI, found in Sambucus nigra (European elder).